A 156-amino-acid chain; its full sequence is 6,7-dimethyl-8-ribityllumazine synthase (156 aa).

5-amino-6-(D-ribitylamino)uracil is bound by residues Phe23, 57-59 (AFE), and 81-83 (AII). Residue 86 to 87 (ST) coordinates (2S)-2-hydroxy-3-oxobutyl phosphate. The active-site Proton donor is His89. 5-amino-6-(D-ribitylamino)uracil is bound at residue Phe114. Residue Arg128 participates in (2S)-2-hydroxy-3-oxobutyl phosphate binding.

Belongs to the DMRL synthase family.

It carries out the reaction (2S)-2-hydroxy-3-oxobutyl phosphate + 5-amino-6-(D-ribitylamino)uracil = 6,7-dimethyl-8-(1-D-ribityl)lumazine + phosphate + 2 H2O + H(+). Its pathway is cofactor biosynthesis; riboflavin biosynthesis; riboflavin from 2-hydroxy-3-oxobutyl phosphate and 5-amino-6-(D-ribitylamino)uracil: step 1/2. Its function is as follows. Catalyzes the formation of 6,7-dimethyl-8-ribityllumazine by condensation of 5-amino-6-(D-ribitylamino)uracil with 3,4-dihydroxy-2-butanone 4-phosphate. This is the penultimate step in the biosynthesis of riboflavin. The polypeptide is 6,7-dimethyl-8-ribityllumazine synthase (Wolinella succinogenes (strain ATCC 29543 / DSM 1740 / CCUG 13145 / JCM 31913 / LMG 7466 / NCTC 11488 / FDC 602W) (Vibrio succinogenes)).